Here is a 321-residue protein sequence, read N- to C-terminus: Mas-related G-protein coupled receptor member D (321 aa).

Over 1–33 the chain is Extracellular; sequence MNQTLNSSGTVESALNYSRGSTVHTAYLVLSSL. Residues asparagine 2, asparagine 6, and asparagine 16 are each glycosylated (N-linked (GlcNAc...) asparagine). Residues 34-54 traverse the membrane as a helical segment; the sequence is AMFTCLCGMAGNSMVIWLLGF. The Cytoplasmic segment spans residues 55–59; sequence RMHRN. The helical transmembrane segment at 60–80 threads the bilayer; that stretch reads PFCIYILNLAAADLLFLFSMA. Residues 81 to 112 lie on the Extracellular side of the membrane; sequence STLSLETQPLVNTTDKVHELMKRLMYFAYTVG. Residue asparagine 92 is glycosylated (N-linked (GlcNAc...) asparagine). The helical transmembrane segment at 113–133 threads the bilayer; it reads LSLLTAISTQRCLSVLFPIWF. Residues 134-142 are Cytoplasmic-facing; the sequence is KCHRPRHLS. Residues 143-163 traverse the membrane as a helical segment; the sequence is AWVCGLLWTLCLLMNGLTSSF. The Extracellular portion of the chain corresponds to 164–184; it reads CSKFLKFNEDRCFRVDMVQAA. The helical transmembrane segment at 185 to 205 threads the bilayer; sequence LIMGVLTPVMTLSSLTLFVWV. Residues 206–218 are Cytoplasmic-facing; it reads RRSSQQWRRQPTR. Residues 219–239 form a helical membrane-spanning segment; the sequence is LFVVVLASVLVFLICSLPLSI. Topologically, residues 240–257 are extracellular; it reads YWFVLYWLSLPPEMQVLC. Residues 258–280 form a helical membrane-spanning segment; it reads FSLSRLSSSVSSSANPVIYFLVG. Residues 281–321 lie on the Cytoplasmic side of the membrane; it reads SRRSHRLPTRSLGTVLQQALREEPELEGGETPTVGTNEMGA. The interval 302–321 is disordered; it reads EEPELEGGETPTVGTNEMGA.

It belongs to the G-protein coupled receptor 1 family. Mas subfamily.

It is found in the cell membrane. Functionally, may regulate nociceptor function and/or development, including the sensation or modulation of pain. Functions as a specific membrane receptor for beta-alanine. Beta-alanine at micromolar doses specifically evoked Ca(2+) influx in cells expressing the receptor. Beta-alanine decreases forskolin-stimulated cAMP production in cells expressing the receptor, suggesting that the receptor couples with G-protein G(q) and G(i). The chain is Mas-related G-protein coupled receptor member D (MRGPRD) from Homo sapiens (Human).